Reading from the N-terminus, the 206-residue chain is uncharacterized protein (206 aa).

The interval 147 to 206 (REEKAQKSKSKSRNQDERGSPLDERLGPKVSDLTLMERIFQVRRKPRKSRRDRRSRVSKR) is disordered. Residues 159-173 (RNQDERGSPLDERLG) are compositionally biased toward basic and acidic residues. The segment covering 187–206 (QVRRKPRKSRRDRRSRVSKR) has biased composition (basic residues).

This is an uncharacterized protein from Schizosaccharomyces pombe (strain 972 / ATCC 24843) (Fission yeast).